A 207-amino-acid chain; its full sequence is FMN-dependent NADH:quinone oxidoreductase 1 (207 aa).

FMN is bound by residues Ser9, 15–17, and 139–142; these read SIS and TRGG.

It belongs to the azoreductase type 1 family. Homodimer. FMN serves as cofactor.

The enzyme catalyses 2 a quinone + NADH + H(+) = 2 a 1,4-benzosemiquinone + NAD(+). It catalyses the reaction N,N-dimethyl-1,4-phenylenediamine + anthranilate + 2 NAD(+) = 2-(4-dimethylaminophenyl)diazenylbenzoate + 2 NADH + 2 H(+). Functionally, quinone reductase that provides resistance to thiol-specific stress caused by electrophilic quinones. In terms of biological role, also exhibits azoreductase activity. Catalyzes the reductive cleavage of the azo bond in aromatic azo compounds to the corresponding amines. The polypeptide is FMN-dependent NADH:quinone oxidoreductase 1 (Trichormus variabilis (strain ATCC 29413 / PCC 7937) (Anabaena variabilis)).